Reading from the N-terminus, the 706-residue chain is Polyribonucleotide nucleotidyltransferase (706 aa).

The Mg(2+) site is built by D486 and D492. A KH domain is found at 553-612 (PRIYTMKINPEKIKDVIGKGGSVIRALTDETGTTIEIEDDGTIKIAATDGDKAKHAIRRI). Residues 622-690 (NRIYAGKVTR…RQGRIRLSMK (69 aa)) form the S1 motif domain.

The protein belongs to the polyribonucleotide nucleotidyltransferase family. In terms of assembly, component of the RNA degradosome, which is a multiprotein complex involved in RNA processing and mRNA degradation. Requires Mg(2+) as cofactor.

Its subcellular location is the cytoplasm. It catalyses the reaction RNA(n+1) + phosphate = RNA(n) + a ribonucleoside 5'-diphosphate. In terms of biological role, involved in mRNA degradation. Catalyzes the phosphorolysis of single-stranded polyribonucleotides processively in the 3'- to 5'-direction. The chain is Polyribonucleotide nucleotidyltransferase from Yersinia enterocolitica serotype O:8 / biotype 1B (strain NCTC 13174 / 8081).